The sequence spans 356 residues: Isocitrate dehydrogenase [NAD] subunit 1, mitochondrial (356 aa).

Residues arginine 106, arginine 137, and aspartate 224 each coordinate substrate. Mg(2+) is bound at residue aspartate 224.

It belongs to the isocitrate and isopropylmalate dehydrogenases family. Octamer of two non-identical subunits IDH1 and IDH2. Mg(2+) serves as cofactor. The cofactor is Mn(2+).

Its subcellular location is the mitochondrion. It carries out the reaction D-threo-isocitrate + NAD(+) = 2-oxoglutarate + CO2 + NADH. Its function is as follows. Performs an essential role in the oxidative function of the citric acid cycle. Also binds RNA; specifically to the 5'-untranslated leaders of mitochondrial mRNAs. The polypeptide is Isocitrate dehydrogenase [NAD] subunit 1, mitochondrial (idh1) (Schizosaccharomyces pombe (strain 972 / ATCC 24843) (Fission yeast)).